The primary structure comprises 137 residues: Phosphoribosyl-ATP pyrophosphatase (137 aa).

The span at 114–124 shows a compositional bias: basic and acidic residues; that stretch reads EGTSGIEEKAL. Residues 114–137 form a disordered region; it reads EGTSGIEEKALRKSLQRAAEEAQP.

This sequence belongs to the PRA-PH family.

It is found in the cytoplasm. It carries out the reaction 1-(5-phospho-beta-D-ribosyl)-ATP + H2O = 1-(5-phospho-beta-D-ribosyl)-5'-AMP + diphosphate + H(+). It functions in the pathway amino-acid biosynthesis; L-histidine biosynthesis; L-histidine from 5-phospho-alpha-D-ribose 1-diphosphate: step 2/9. The sequence is that of Phosphoribosyl-ATP pyrophosphatase from Paracidovorax citrulli (strain AAC00-1) (Acidovorax citrulli).